Reading from the N-terminus, the 176-residue chain is Flavodoxin-like domain-containing protein BilS (176 aa).

It functions in the pathway porphyrin-containing compound metabolism; protoheme degradation. Functionally, together with BilR, catalyzes reduction of mesobilirubin and/or bilirubin to urobilinogen, a key step during heme degradation. BilS is probably involved in electron transfer for the bilirubin reductase BilR. The protein is Flavodoxin-like domain-containing protein BilS of Clostridioides difficile (strain CD3).